The primary structure comprises 102 residues: NADH-quinone oxidoreductase subunit K (102 aa).

Transmembrane regions (helical) follow at residues 4 to 24 (IPME…LVGL), 30 to 50 (MLFV…AFIV), and 62 to 82 (VMFL…LALL).

Belongs to the complex I subunit 4L family. As to quaternary structure, NDH-1 is composed of 14 different subunits. Subunits NuoA, H, J, K, L, M, N constitute the membrane sector of the complex.

The protein localises to the cell inner membrane. The catalysed reaction is a quinone + NADH + 5 H(+)(in) = a quinol + NAD(+) + 4 H(+)(out). In terms of biological role, NDH-1 shuttles electrons from NADH, via FMN and iron-sulfur (Fe-S) centers, to quinones in the respiratory chain. The immediate electron acceptor for the enzyme in this species is believed to be ubiquinone. Couples the redox reaction to proton translocation (for every two electrons transferred, four hydrogen ions are translocated across the cytoplasmic membrane), and thus conserves the redox energy in a proton gradient. In Chromohalobacter salexigens (strain ATCC BAA-138 / DSM 3043 / CIP 106854 / NCIMB 13768 / 1H11), this protein is NADH-quinone oxidoreductase subunit K.